A 688-amino-acid chain; its full sequence is DNA ligase (688 aa).

Residues Asp42–Asp46, Ser91–Leu92, and Glu128 contribute to the NAD(+) site. Lys130 functions as the N6-AMP-lysine intermediate in the catalytic mechanism. NAD(+) is bound by residues Arg151, Glu188, Lys305, and Lys329. The Zn(2+) site is built by Cys423, Cys426, Cys441, and Cys447. The 81-residue stretch at Ala608 to Leu688 folds into the BRCT domain.

This sequence belongs to the NAD-dependent DNA ligase family. LigA subfamily. Mg(2+) is required as a cofactor. Requires Mn(2+) as cofactor.

The enzyme catalyses NAD(+) + (deoxyribonucleotide)n-3'-hydroxyl + 5'-phospho-(deoxyribonucleotide)m = (deoxyribonucleotide)n+m + AMP + beta-nicotinamide D-nucleotide.. DNA ligase that catalyzes the formation of phosphodiester linkages between 5'-phosphoryl and 3'-hydroxyl groups in double-stranded DNA using NAD as a coenzyme and as the energy source for the reaction. It is essential for DNA replication and repair of damaged DNA. The polypeptide is DNA ligase (Paraburkholderia xenovorans (strain LB400)).